The following is a 369-amino-acid chain: Methylthioribose-1-phosphate isomerase (369 aa).

Residues 54 to 56 (RGA), Arg-95, and Gln-208 contribute to the substrate site. Asp-249 functions as the Proton donor in the catalytic mechanism. 259 to 260 (NK) serves as a coordination point for substrate.

The protein belongs to the eIF-2B alpha/beta/delta subunits family. MtnA subfamily.

It carries out the reaction 5-(methylsulfanyl)-alpha-D-ribose 1-phosphate = 5-(methylsulfanyl)-D-ribulose 1-phosphate. Its pathway is amino-acid biosynthesis; L-methionine biosynthesis via salvage pathway; L-methionine from S-methyl-5-thio-alpha-D-ribose 1-phosphate: step 1/6. Catalyzes the interconversion of methylthioribose-1-phosphate (MTR-1-P) into methylthioribulose-1-phosphate (MTRu-1-P). The sequence is that of Methylthioribose-1-phosphate isomerase from Desulfatibacillum aliphaticivorans.